The following is a 506-amino-acid chain: Chorion-specific transcription factor GCMb (506 aa).

Positions 19 to 174 (LSWDINDPQM…KSETEARRSA (156 aa)) form a DNA-binding region, GCM. Zn(2+) contacts are provided by Cys-81, Cys-87, Cys-91, Cys-118, Cys-121, Cys-130, His-157, and His-159. Over residues 155–172 (GVHDHPRPESKSETEARR) the composition is skewed to basic and acidic residues. The tract at residues 155–213 (GVHDHPRPESKSETEARRSAIKRQMASFYQPQKKRIRESEAEENQDSSGHFSNIPPLEN) is disordered. Positions 379–395 (LQTVITTTTKVSYQAYQ) are C-terminal conserved inhibitory domain (CCID).

Its subcellular location is the nucleus. Transcription factor that binds specific sequences on gene promoters and activate their transcription. Through the regulation of gene transcription, may play a role in parathyroid gland development. The polypeptide is Chorion-specific transcription factor GCMb (Homo sapiens (Human)).